The following is a 483-amino-acid chain: Aspartyl/glutamyl-tRNA(Asn/Gln) amidotransferase subunit B (483 aa).

It belongs to the GatB/GatE family. GatB subfamily. In terms of assembly, heterotrimer of A, B and C subunits.

It carries out the reaction L-glutamyl-tRNA(Gln) + L-glutamine + ATP + H2O = L-glutaminyl-tRNA(Gln) + L-glutamate + ADP + phosphate + H(+). The catalysed reaction is L-aspartyl-tRNA(Asn) + L-glutamine + ATP + H2O = L-asparaginyl-tRNA(Asn) + L-glutamate + ADP + phosphate + 2 H(+). Functionally, allows the formation of correctly charged Asn-tRNA(Asn) or Gln-tRNA(Gln) through the transamidation of misacylated Asp-tRNA(Asn) or Glu-tRNA(Gln) in organisms which lack either or both of asparaginyl-tRNA or glutaminyl-tRNA synthetases. The reaction takes place in the presence of glutamine and ATP through an activated phospho-Asp-tRNA(Asn) or phospho-Glu-tRNA(Gln). The polypeptide is Aspartyl/glutamyl-tRNA(Asn/Gln) amidotransferase subunit B (Herpetosiphon aurantiacus (strain ATCC 23779 / DSM 785 / 114-95)).